Here is an 870-residue protein sequence, read N- to C-terminus: DNA mismatch repair protein MutS (870 aa).

ATP is bound at residue 629–636 (GPNMGGKS).

The protein belongs to the DNA mismatch repair MutS family.

Functionally, this protein is involved in the repair of mismatches in DNA. It is possible that it carries out the mismatch recognition step. This protein has a weak ATPase activity. The protein is DNA mismatch repair protein MutS of Polaromonas naphthalenivorans (strain CJ2).